A 142-amino-acid polypeptide reads, in one-letter code: Large ribosomal subunit protein uL13 (142 aa).

It belongs to the universal ribosomal protein uL13 family. Part of the 50S ribosomal subunit.

This protein is one of the early assembly proteins of the 50S ribosomal subunit, although it is not seen to bind rRNA by itself. It is important during the early stages of 50S assembly. The sequence is that of Large ribosomal subunit protein uL13 from Pseudomonas fluorescens (strain ATCC BAA-477 / NRRL B-23932 / Pf-5).